Here is a 323-residue protein sequence, read N- to C-terminus: o-succinylbenzoate synthase (323 aa).

Lys134 (proton donor) is an active-site residue. Mg(2+) contacts are provided by Asp162, Glu191, and Asp214. The Proton acceptor role is filled by Lys236.

It belongs to the mandelate racemase/muconate lactonizing enzyme family. MenC type 1 subfamily. The cofactor is a divalent metal cation.

The enzyme catalyses (1R,6R)-6-hydroxy-2-succinyl-cyclohexa-2,4-diene-1-carboxylate = 2-succinylbenzoate + H2O. It participates in quinol/quinone metabolism; 1,4-dihydroxy-2-naphthoate biosynthesis; 1,4-dihydroxy-2-naphthoate from chorismate: step 4/7. The protein operates within quinol/quinone metabolism; menaquinone biosynthesis. Its function is as follows. Converts 2-succinyl-6-hydroxy-2,4-cyclohexadiene-1-carboxylate (SHCHC) to 2-succinylbenzoate (OSB). In Proteus mirabilis (strain HI4320), this protein is o-succinylbenzoate synthase.